The primary structure comprises 412 residues: 1-deoxy-D-xylulose 5-phosphate reductoisomerase (412 aa).

8 residues coordinate NADPH: threonine 10, glycine 11, serine 12, isoleucine 13, glycine 36, lysine 37, asparagine 38, and asparagine 130. Lysine 131 lines the 1-deoxy-D-xylulose 5-phosphate pocket. NADPH is bound at residue glutamate 132. Aspartate 156 contacts Mn(2+). Residues serine 157, glutamate 158, serine 194, and histidine 217 each coordinate 1-deoxy-D-xylulose 5-phosphate. Glutamate 158 is a Mn(2+) binding site. NADPH is bound at residue glycine 223. Positions 230, 235, 236, and 239 each coordinate 1-deoxy-D-xylulose 5-phosphate. Residue glutamate 239 coordinates Mn(2+).

It belongs to the DXR family. It depends on Mg(2+) as a cofactor. Mn(2+) is required as a cofactor.

It carries out the reaction 2-C-methyl-D-erythritol 4-phosphate + NADP(+) = 1-deoxy-D-xylulose 5-phosphate + NADPH + H(+). Its pathway is isoprenoid biosynthesis; isopentenyl diphosphate biosynthesis via DXP pathway; isopentenyl diphosphate from 1-deoxy-D-xylulose 5-phosphate: step 1/6. In terms of biological role, catalyzes the NADPH-dependent rearrangement and reduction of 1-deoxy-D-xylulose-5-phosphate (DXP) to 2-C-methyl-D-erythritol 4-phosphate (MEP). This is 1-deoxy-D-xylulose 5-phosphate reductoisomerase from Prochlorococcus marinus (strain NATL2A).